Consider the following 143-residue polypeptide: MIQKLFLLVRSLVILSIMLSLGNLIAYYIPSGVPGSIWGLLLLFLGLTTRVIHLNWIYLGASLLIRFMAVLFVPVSVGIIKYSDLLIEQINILLVPNIVSTCVTLLVIGFLGHYLYQMQSFTHKRKKVIKRKRKSGKTSQLVC.

The next 4 helical transmembrane spans lie at 1–21 (MIQK…MLSL), 33–52 (VPGS…TRVI), 60–80 (GASL…VGII), and 92–112 (ILLV…GFLG).

The protein belongs to the UPF0299 family.

It localises to the cell inner membrane. In Haemophilus influenzae (strain PittEE), this protein is UPF0299 membrane protein CGSHiEE_04225.